The primary structure comprises 1051 residues: Carbamoyl phosphate synthase large chain (1051 aa).

The interval 1-399 (MKETPKKVLV…SLQKAVRMLD (399 aa)) is carboxyphosphate synthetic domain. Positions 127, 167, 173, 174, 206, 208, 213, 239, 240, 241, 282, and 296 each coordinate ATP. Positions 131-325 (RETMIENNLP…LAYVSAKLAL (195 aa)) constitute an ATP-grasp 1 domain. 3 residues coordinate Mg(2+): Gln282, Glu296, and Asn298. Residues Gln282, Glu296, and Asn298 each coordinate Mn(2+). Residues 400 to 548 (IGEPGVVGGK…LTYNGTEDDL (149 aa)) are oligomerization domain. Residues 549 to 930 (EFSQGNKLLI…LKSWLSSIPN (382 aa)) are carbamoyl phosphate synthetic domain. In terms of domain architecture, ATP-grasp 2 spans 673-863 (SKLLDKLGIS…LINESMKAIF (191 aa)). 10 residues coordinate ATP: Arg709, Lys748, Ile750, Glu755, Gly779, Val780, His781, Ser782, Gln822, and Glu834. The Mg(2+) site is built by Gln822, Glu834, and Asn836. Mn(2+) is bound by residues Gln822, Glu834, and Asn836. Residues 930-1051 (NRIPNKNGIA…FEISEYGGGI (122 aa)) enclose the MGS-like domain. The tract at residues 931-1051 (RIPNKNGIAL…FEISEYGGGI (121 aa)) is allosteric domain.

It belongs to the CarB family. In terms of assembly, composed of two chains; the small (or glutamine) chain promotes the hydrolysis of glutamine to ammonia, which is used by the large (or ammonia) chain to synthesize carbamoyl phosphate. Tetramer of heterodimers (alpha,beta)4. The cofactor is Mg(2+). It depends on Mn(2+) as a cofactor.

The enzyme catalyses hydrogencarbonate + L-glutamine + 2 ATP + H2O = carbamoyl phosphate + L-glutamate + 2 ADP + phosphate + 2 H(+). The catalysed reaction is hydrogencarbonate + NH4(+) + 2 ATP = carbamoyl phosphate + 2 ADP + phosphate + 2 H(+). It functions in the pathway amino-acid biosynthesis; L-arginine biosynthesis; carbamoyl phosphate from bicarbonate: step 1/1. It participates in pyrimidine metabolism; UMP biosynthesis via de novo pathway; (S)-dihydroorotate from bicarbonate: step 1/3. Functionally, large subunit of the glutamine-dependent carbamoyl phosphate synthetase (CPSase). CPSase catalyzes the formation of carbamoyl phosphate from the ammonia moiety of glutamine, carbonate, and phosphate donated by ATP, constituting the first step of 2 biosynthetic pathways, one leading to arginine and/or urea and the other to pyrimidine nucleotides. The large subunit (synthetase) binds the substrates ammonia (free or transferred from glutamine from the small subunit), hydrogencarbonate and ATP and carries out an ATP-coupled ligase reaction, activating hydrogencarbonate by forming carboxy phosphate which reacts with ammonia to form carbamoyl phosphate. This Saccharolobus islandicus (strain M.16.27) (Sulfolobus islandicus) protein is Carbamoyl phosphate synthase large chain.